The following is a 63-amino-acid chain: Cecropin-A2 (63 aa).

A signal peptide spans 1–23 (MNFYNIFVFVALILAITIGQSEA). Arginine 62 is subject to Arginine amide.

This sequence belongs to the cecropin family. As to expression, strongly expressed in larval, pupal and adult fat body and hemocytes after injection of bacteria. Maximal expression in the adult involves fat body cells of the head, thorax and abdomen.

Its subcellular location is the secreted. Its function is as follows. Cecropins have lytic and antibacterial activity against several Gram-positive and Gram-negative bacteria. The sequence is that of Cecropin-A2 from Drosophila melanogaster (Fruit fly).